A 222-amino-acid polypeptide reads, in one-letter code: MNRSLYRTRIKFCGMTRAGDIRLAGELGVDAVGFIFAHGSPRRVAPAEARAMRQATAPMVDVVALFRNNSKEEVREVVRTVRPTLLQFHGEEDDAFCRSFNLPYLKAVPMGSSGVNGEDANARTLQLSYPNTAGFLFDSHAPGAGGGTGKTFDWSRLPTGLHRPFLLAGGINADNVFDAIVATLPWGVDVSSGVELAPGIKDGHKMRKFVEEVRRADCHDMS.

Belongs to the TrpF family.

The catalysed reaction is N-(5-phospho-beta-D-ribosyl)anthranilate = 1-(2-carboxyphenylamino)-1-deoxy-D-ribulose 5-phosphate. It participates in amino-acid biosynthesis; L-tryptophan biosynthesis; L-tryptophan from chorismate: step 3/5. The polypeptide is N-(5'-phosphoribosyl)anthranilate isomerase (Xanthomonas euvesicatoria pv. vesicatoria (strain 85-10) (Xanthomonas campestris pv. vesicatoria)).